A 221-amino-acid chain; its full sequence is GTP-binding nuclear protein Ran-2 (221 aa).

The 165-residue stretch at 10–174 folds into the Small GTPase Ran-type domain; it reads DYPSFKLVIV…LYLARKLAGD (165 aa). 21–28 lines the GTP pocket; the sequence is DGGTGKTT. A switch-I region spans residues 40 to 48; that stretch reads KKYEPTIGV. GTP contacts are provided by residues Gly-71, 125–128, and 153–155; these read NKVD and SAK. Positions 71–87 are switch-II; the sequence is GQEKFGGLRDGYYIHGQ. Residues 202 to 212 show a composition bias toward low complexity; it reads ADLAAAAAQPL. Residues 202–221 form a disordered region; sequence ADLAAAAAQPLPDDDDDAFE.

Belongs to the small GTPase superfamily. Ran family. In terms of assembly, found in a nuclear export complex with RanGTP, exportin and pre-miRNA. Interacts with RanBP1a and RanBP1b. Interacts with PHRIP1. Interacts with KPNB1. Binds to PHIP1.

The protein resides in the nucleus. Its subcellular location is the nucleus envelope. Its function is as follows. GTP-binding protein involved in nucleocytoplasmic transport. Required for the import of protein into the nucleus and also for RNA export. Involved in chromatin condensation and control of cell cycle. The chain is GTP-binding nuclear protein Ran-2 from Arabidopsis thaliana (Mouse-ear cress).